We begin with the raw amino-acid sequence, 131 residues long: Large ribosomal subunit protein bL17 (131 aa).

It belongs to the bacterial ribosomal protein bL17 family. As to quaternary structure, part of the 50S ribosomal subunit. Contacts protein L32.

This Vesicomyosocius okutanii subsp. Calyptogena okutanii (strain HA) protein is Large ribosomal subunit protein bL17.